The sequence spans 403 residues: Homoserine O-succinyltransferase (403 aa).

A disordered region spans residues 1–31; that stretch reads MTELQVDPAASADPAAAADTPRHPAATLPPD. Residues 7–26 show a composition bias toward low complexity; that stretch reads DPAASADPAAAADTPRHPAA. The region spanning 74–383 is the AB hydrolase-1 domain; the sequence is NAVLICHALN…HGHDAFLLED (310 aa). The Nucleophile role is filled by S178. R248 is a substrate binding site. Residues D343 and H376 contribute to the active site. Position 377 (D377) interacts with substrate.

This sequence belongs to the AB hydrolase superfamily. MetX family. As to quaternary structure, homodimer.

The protein resides in the cytoplasm. The catalysed reaction is L-homoserine + succinyl-CoA = O-succinyl-L-homoserine + CoA. It participates in amino-acid biosynthesis; L-methionine biosynthesis via de novo pathway; O-succinyl-L-homoserine from L-homoserine: step 1/1. Its function is as follows. Transfers a succinyl group from succinyl-CoA to L-homoserine, forming succinyl-L-homoserine. The protein is Homoserine O-succinyltransferase of Ralstonia nicotianae (strain ATCC BAA-1114 / GMI1000) (Ralstonia solanacearum).